The primary structure comprises 1353 residues: Adenylate cyclase type 9 (1353 aa).

Disordered regions lie at residues 1–27 and 51–73; these read MASS…DSNS and SSSC…GGRL. At 1–117 the chain is on the cytoplasmic side; sequence MASSPHQQLL…CFPQTQRRFR (117 aa). A compositionally biased stretch (polar residues) spans 16 to 27; it reads EVSCDSSGDSNS. The span at 51 to 66 shows a compositional bias: low complexity; sequence SSSCSSSGDSGGLPRR. A helical transmembrane segment spans residues 118-138; that stretch reads YALFYVGFACLLWSIYFAVHM. At 139–141 the chain is on the extracellular side; it reads KSK. The helical transmembrane segment at 142 to 162 threads the bilayer; that stretch reads VIVMVVPALCFLVVCVGFFLF. The Cytoplasmic portion of the chain corresponds to 163–171; it reads TFTKLYARH. The helical transmembrane segment at 172-192 threads the bilayer; that stretch reads YAWTSLALTLLVFALTLAAQF. The Extracellular segment spans residues 193-215; sequence QVWTPLSGRVDSSNHTLTATPAD. Asn206 carries N-linked (GlcNAc...) asparagine glycosylation. A helical transmembrane segment spans residues 216–235; the sequence is TCLSQVGSFSICIEVLLLLY. Residues 236-241 are Cytoplasmic-facing; it reads TVMQLP. The chain crosses the membrane as a helical span at residues 242 to 259; the sequence is LYLSLFLGVVYSVLFETF. The Extracellular portion of the chain corresponds to 260 to 280; the sequence is GYHFRNEDCYPSPGPGALHWE. Residues 281–301 form a helical membrane-spanning segment; sequence LLSRALLHVCIHAIGIHLFVM. Over 302-786 the chain is Cytoplasmic; it reads SQVRSRSTFL…VKTFASATFS (485 aa). Residues 349 to 375 form a disordered region; sequence QGDEESENSVKRHATSSPKNRKKKSSI. Residues 359 to 374 show a composition bias toward basic residues; sequence KRHATSSPKNRKKKSS. Mg(2+) contacts are provided by Asp399, Ile400, and Asp443. Residues 399–404, 441–443, and Arg487 each bind ATP; these read DIVGFT and LGD. Disordered regions lie at residues 596–615 and 641–685; these read DSRE…GSVS and SEAG…EEKL. A phosphoserine mark is found at Ser610 and Ser613. Positions 661–676 are enriched in polar residues; that stretch reads STKASGGPNSKTQNGL. A phosphoserine mark is found at Ser688, Ser691, and Ser706. Residues 787–807 form a helical membrane-spanning segment; the sequence is SLLDVFLSTTVFLILSITCFL. The Extracellular segment spans residues 808–818; that stretch reads KYGATATPPPP. A helical membrane pass occupies residues 819–839; the sequence is AALAVFGADLLLEVLSLIVSI. Residues 840–867 are Cytoplasmic-facing; it reads RMVFFLEDVMTCTKWLLEWIAGWLPRHC. A helical transmembrane segment spans residues 868–888; that stretch reads IGAILVSLPALAVYSHITSEF. Over 889–891 the chain is Extracellular; it reads ETN. The helical transmembrane segment at 892–912 threads the bilayer; that stretch reads IHVTMFTGSAVLVAVVHYCNF. The Cytoplasmic segment spans residues 913–920; sequence CQLSSWMR. A helical transmembrane segment spans residues 921 to 941; the sequence is SSLATIVGAGLLLLLHISLCQ. Over 942 to 975 the chain is Extracellular; that stretch reads DSSIVMSPLDSAQNFSAQRNPCNSSVLQDGRRPA. Residues Asn955 and Asn964 are each glycosylated (N-linked (GlcNAc...) asparagine). Residues 976 to 996 form a helical membrane-spanning segment; that stretch reads SLIGKELILTFFLLLLLVWFL. Over 997–1353 the chain is Cytoplasmic; it reads NREFEVSYRL…LSKLNVSKSV (357 aa). ATP contacts are provided by residues Lys1108, 1185-1187, 1192-1196, and Lys1232; these read DIW and NIASR. 5 positions are modified to phosphoserine: Ser1257, Ser1259, Ser1295, Ser1307, and Ser1332. The tract at residues 1290-1314 is disordered; sequence KASLGSDDSTQAKEARLSSKRSWRE. Residues 1299 to 1314 show a composition bias toward basic and acidic residues; it reads TQAKEARLSSKRSWRE.

Belongs to the adenylyl cyclase class-4/guanylyl cyclase family. Requires Mg(2+) as cofactor. It depends on Mn(2+) as a cofactor. Detected in brain, spleen, lung, liver and testis (at protein level). Detected in brain, especially in hippocampus, cerebellum and neocortex. Found in decreasing order in skeletal muscle, heart, adrenal gland, ovary and brain; and to a lesser extent, in kidney, liver, testis, lung, thymus and spleen.

It is found in the cell membrane. The enzyme catalyses ATP = 3',5'-cyclic AMP + diphosphate. Its activity is regulated as follows. Insensitive to calcium/calmodulin, forskolin and somatostatin. Stimulated by beta-adrenergic receptor activation. Activity is down-regulated by calcium/calcineurin. In terms of biological role, adenylyl cyclase that catalyzes the formation of the signaling molecule cAMP in response to activation of G protein-coupled receptors. Contributes to signaling cascades activated by CRH (corticotropin-releasing factor), corticosteroids and by beta-adrenergic receptors. The sequence is that of Adenylate cyclase type 9 (Adcy9) from Mus musculus (Mouse).